The primary structure comprises 341 residues: Glycerol-3-phosphate dehydrogenase [NAD(P)+] (341 aa).

NADPH-binding residues include Ser15, Trp16, Arg36, and Lys110. Sn-glycerol 3-phosphate contacts are provided by Lys110, Gly139, and Ser141. Ala143 is an NADPH binding site. The sn-glycerol 3-phosphate site is built by Lys194, Asp247, Ser257, Arg258, and Asn259. Lys194 serves as the catalytic Proton acceptor. Arg258 serves as a coordination point for NADPH. 2 residues coordinate NADPH: Val282 and Glu284.

Belongs to the NAD-dependent glycerol-3-phosphate dehydrogenase family.

It is found in the cytoplasm. It carries out the reaction sn-glycerol 3-phosphate + NAD(+) = dihydroxyacetone phosphate + NADH + H(+). The enzyme catalyses sn-glycerol 3-phosphate + NADP(+) = dihydroxyacetone phosphate + NADPH + H(+). It functions in the pathway membrane lipid metabolism; glycerophospholipid metabolism. Functionally, catalyzes the reduction of the glycolytic intermediate dihydroxyacetone phosphate (DHAP) to sn-glycerol 3-phosphate (G3P), the key precursor for phospholipid synthesis. This is Glycerol-3-phosphate dehydrogenase [NAD(P)+] from Xanthomonas campestris pv. campestris (strain 8004).